The sequence spans 65 residues: Small ribosomal subunit protein bS21 (65 aa).

It belongs to the bacterial ribosomal protein bS21 family.

The chain is Small ribosomal subunit protein bS21 from Chlorobium limicola (strain DSM 245 / NBRC 103803 / 6330).